The following is a 561-amino-acid chain: NAD(P)H-quinone oxidoreductase chain 4 2 (561 aa).

Helical transmembrane passes span 6-26, 36-56, 87-107, 115-135, 136-156, 169-189, 210-230, 244-264, 275-295, 312-332, 333-353, 376-396, 419-439, and 490-510; these read FPWL…IPFI, WYGL…FWKY, LSMP…FAAW, LFYF…VAQD, LMLL…LISI, FLLY…GMAL, AFEL…LAVF, SAPV…YGLI, HVYF…YGGL, VAHM…GISG, ALLQ…LAGV, IFAL…MSGF, VTVF…LSML, and VAIA…PKIA.

Belongs to the complex I subunit 4 family.

It localises to the cellular thylakoid membrane. It catalyses the reaction a plastoquinone + NADH + (n+1) H(+)(in) = a plastoquinol + NAD(+) + n H(+)(out). The catalysed reaction is a plastoquinone + NADPH + (n+1) H(+)(in) = a plastoquinol + NADP(+) + n H(+)(out). In terms of biological role, NDH-1 shuttles electrons from NAD(P)H, via FMN and iron-sulfur (Fe-S) centers, to quinones in the respiratory chain. The immediate electron acceptor for the enzyme in this species is believed to be plastoquinone. Couples the redox reaction to proton translocation (for every two electrons transferred, four hydrogen ions are translocated across the cytoplasmic membrane), and thus conserves the redox energy in a proton gradient. In Trichodesmium erythraeum (strain IMS101), this protein is NAD(P)H-quinone oxidoreductase chain 4 2.